Consider the following 94-residue polypeptide: Putative pterin-4-alpha-carbinolamine dehydratase (94 aa).

This sequence belongs to the pterin-4-alpha-carbinolamine dehydratase family.

The catalysed reaction is (4aS,6R)-4a-hydroxy-L-erythro-5,6,7,8-tetrahydrobiopterin = (6R)-L-erythro-6,7-dihydrobiopterin + H2O. The polypeptide is Putative pterin-4-alpha-carbinolamine dehydratase (Mycobacteroides abscessus (strain ATCC 19977 / DSM 44196 / CCUG 20993 / CIP 104536 / JCM 13569 / NCTC 13031 / TMC 1543 / L948) (Mycobacterium abscessus)).